A 189-amino-acid polypeptide reads, in one-letter code: UPF0301 protein RC0043 (189 aa).

This sequence belongs to the UPF0301 (AlgH) family.

The polypeptide is UPF0301 protein RC0043 (Rickettsia conorii (strain ATCC VR-613 / Malish 7)).